The following is a 90-amino-acid chain: Defensin-like protein 178 (90 aa).

The first 23 residues, 1–23 (MAKATSSLVVPIIFLVIFALVEQ), serve as a signal peptide directing secretion. Disulfide bonds link Cys-27-Cys-66, Cys-36-Cys-55, Cys-39-Cys-60, and Cys-43-Cys-62.

It belongs to the DEFL family.

It localises to the secreted. This is Defensin-like protein 178 (LCR64) from Arabidopsis thaliana (Mouse-ear cress).